Here is an 897-residue protein sequence, read N- to C-terminus: MRSKHLVTLFIITFLSFSTVKVWGKDVFAGFVTKKLKTLLDCNFALYYNFKGNGPDAGSFLDFVDEPEQFYWFVEHFLSVKFRVPKHLKDKNIHNFTPCLNRSWVSEFLKEYEEPFVNPVMKFLDKEQRLFFTYNFGDVEPQGKYTYFPVKEFHKYCILPPLIKTNIKDGESGEFLKYQLNKEEYKVFLSSVGSQMTAIKNLYSTVEDEQRKQLLKVIIENESTNDISVQCPTYNIKLHYTKECANSNNILKCIDEFLRKTCEKKTESKHPSADLCEHLQFLFESLKNPYLDNFKKFMTNSDFTLIKPQSVWNVPIFDIYKPKNYLDSVQNLDTECFKKLNSKNLIFLSFHDDIPNNPYYNVELQEIVKLSTYTYSIFDKLYNFFFVFKKSGAPISPVSVKELSHNITDFSFKEDNSEIQCQNVRKSLDLEVDVETMKGIAAEKLCKIIEKFILTKDDASKPEKSDIHRGFRILCILISTHVEAYNIVRQLLNMESMISLTRYTSLYIHKFFKSVTLLKGNFLYKNNKAIRYSRACSKASLHVPSVLYRRNIYIPETFLSLYLGLSNLVSSNPSSPFFEYAIIEFLVTYYNKGSEKFVLYFISIISVLYINEYYYEQLSCFYPKEFELIKSRMIHPNIVDRILKGIDNLMKSTRYDKMRTMYLDFESSDIFSREKVFTALYNFDSFIKTNEQLKKKNLEEISEIPVQLETSNDGIGYRKQDVLYETDKPQTMDEASYEETVDEDAHHVNEKQHSAHFLDAIAEKDILEEKTKDQDLEIELYKYMGPLKEQSKSTSAASTSDELSGSEGPSTESTSTGNQGEDKTTDNTYKEMEELEEAEGTSNLKKGLEFYKSSLKLDQLDKEKPKKKKSKRKKKRDSSSDRILLEESKTFTSENEL.

An N-terminal signal peptide occupies residues 1 to 24 (MRSKHLVTLFIITFLSFSTVKVWG). 5 disulfides stabilise this stretch: C157–C231, C244–C253, C262–C276, C421–C620, and C475–C536. The chain crosses the membrane as a helical span at residues 597 to 615 (FVLYFISIISVLYINEYYY). Disordered regions lie at residues 788-845 (KEQS…SNLK) and 859-897 (QLDK…ENEL). Over residues 792-801 (KSTSAASTSD) the composition is skewed to polar residues. The span at 802–817 (ELSGSEGPSTESTSTG) shows a compositional bias: low complexity. S804 is subject to Phosphoserine. Positions 820–832 (GEDKTTDNTYKEM) are enriched in basic and acidic residues. The span at 865–876 (PKKKKSKRKKKR) shows a compositional bias: basic residues. Over residues 877–889 (DSSSDRILLEESK) the composition is skewed to basic and acidic residues.

In terms of assembly, component of the RhopH complex, composed of CLAG3.1/CLAG3.2, RhopH2 and RhopH3 with a 1:1:1 subunit stoichiometry. Interacts with CLAG3.1/CLAG3.2. Interacts with CDPK1; the interaction promotes RhopH3 phosphorylation in merozoites. Proteolytically cleaved near C-terminus.

The protein localises to the host cell membrane. The protein resides in the parasitophorous vacuole membrane. It is found in the cytoplasmic vesicle. It localises to the secretory vesicle. Its subcellular location is the rhoptry. Its function is as follows. Participates in the formation of new permeability pathways in Plasmodium-infected erythrocytes enabling the uptake of nutrients from the blood plasma. Required for maintaining invasion capacity of merozoites. Required for the trophozoite to schizont developmental transition of the intracellular parasite. This chain is High molecular weight rhoptry protein 3, found in Plasmodium falciparum.